The chain runs to 270 residues: Putative pyruvate, phosphate dikinase regulatory protein (270 aa).

G148 to T155 contacts ADP.

This sequence belongs to the pyruvate, phosphate/water dikinase regulatory protein family. PDRP subfamily.

The enzyme catalyses N(tele)-phospho-L-histidyl/L-threonyl-[pyruvate, phosphate dikinase] + ADP = N(tele)-phospho-L-histidyl/O-phospho-L-threonyl-[pyruvate, phosphate dikinase] + AMP + H(+). It carries out the reaction N(tele)-phospho-L-histidyl/O-phospho-L-threonyl-[pyruvate, phosphate dikinase] + phosphate + H(+) = N(tele)-phospho-L-histidyl/L-threonyl-[pyruvate, phosphate dikinase] + diphosphate. Functionally, bifunctional serine/threonine kinase and phosphorylase involved in the regulation of the pyruvate, phosphate dikinase (PPDK) by catalyzing its phosphorylation/dephosphorylation. In Bacillus cytotoxicus (strain DSM 22905 / CIP 110041 / 391-98 / NVH 391-98), this protein is Putative pyruvate, phosphate dikinase regulatory protein.